Consider the following 1068-residue polypeptide: Phosphatidylinositol 4,5-bisphosphate 3-kinase catalytic subunit alpha isoform (1068 aa).

Residues 16 to 105 (MPPRILVECL…QPFLKVIEPV (90 aa)) form the PI3K-ABD domain. The region spanning 187–289 (KGQIIVVIWV…GRMPNLMLMA (103 aa)) is the PI3K-RBD domain. The region spanning 330-487 (INSALRIKIL…DWFSSVVKFP (158 aa)) is the C2 PI3K-type domain. The region spanning 517–694 (LARDNELREN…GLLLESYCRA (178 aa)) is the PIK helical domain. Positions 765-1051 (RLEECRIMSS…QMNDAHHGGW (287 aa)) constitute a PI3K/PI4K catalytic domain. A G-loop region spans residues 771-777 (IMSSAKR). The segment at 912 to 920 (GIGDRHNSN) is catalytic loop. Residues 931-957 (HIDFGHFLDHKKKKFGYKRERVPFVLT) are activation loop.

It belongs to the PI3/PI4-kinase family. Heterodimer of a catalytic subunit PIK3CA and a p85 regulatory subunit (PIK3R1, PIK3R2 or PIK3R3). Interacts with IRS1 in nuclear extracts. Interacts with RUFY3. Interacts with RASD2. Interacts with APPL1. Interacts with HRAS and KRAS. Interaction with HRAS/KRAS is required for PI3K pathway signaling and cell proliferation stimulated by EGF and FGF2. Interacts with FAM83B; activates the PI3K/AKT signaling cascade.

It carries out the reaction a 1,2-diacyl-sn-glycero-3-phospho-(1D-myo-inositol-4,5-bisphosphate) + ATP = a 1,2-diacyl-sn-glycero-3-phospho-(1D-myo-inositol-3,4,5-trisphosphate) + ADP + H(+). It catalyses the reaction a 1,2-diacyl-sn-glycero-3-phospho-(1D-myo-inositol) + ATP = a 1,2-diacyl-sn-glycero-3-phospho-(1D-myo-inositol-3-phosphate) + ADP + H(+). The catalysed reaction is L-seryl-[protein] + ATP = O-phospho-L-seryl-[protein] + ADP + H(+). The enzyme catalyses 1,2-dioctanoyl-sn-glycero-3-phospho-(1D-myo-inositol-4,5-bisphosphate) + ATP = 1,2-dioctanoyl-sn-glycero-3-phospho-(1D-myo-inositol-3,4,5-trisphosphate) + ADP + H(+). It carries out the reaction 1-octadecanoyl-2-(5Z,8Z,11Z,14Z)-eicosatetraenoyl-sn-glycero-3-phospho-1D-myo-inositol 4,5-bisphosphate + ATP = 1-octadecanoyl-2-(5Z,8Z,11Z,14Z-eicosatetraenoyl)-sn-glycero-3-phospho-(1D-myo-inositol 3,4,5-triphosphate) + ADP + H(+). It functions in the pathway phospholipid metabolism; phosphatidylinositol phosphate biosynthesis. Functionally, phosphoinositide-3-kinase (PI3K) phosphorylates phosphatidylinositol (PI) and its phosphorylated derivatives at position 3 of the inositol ring to produce 3-phosphoinositides. Uses ATP and PtdIns(4,5)P2 (phosphatidylinositol 4,5-bisphosphate) to generate phosphatidylinositol 3,4,5-trisphosphate (PIP3). PIP3 plays a key role by recruiting PH domain-containing proteins to the membrane, including AKT1 and PDPK1, activating signaling cascades involved in cell growth, survival, proliferation, motility and morphology. Participates in cellular signaling in response to various growth factors. Involved in the activation of AKT1 upon stimulation by receptor tyrosine kinases ligands such as EGF, insulin, IGF1, VEGFA and PDGF. Involved in signaling via insulin-receptor substrate (IRS) proteins. Essential in endothelial cell migration during vascular development through VEGFA signaling, possibly by regulating RhoA activity. Required for lymphatic vasculature development, possibly by binding to RAS and by activation by EGF and FGF2, but not by PDGF. Regulates invadopodia formation through the PDPK1-AKT1 pathway. Participates in cardiomyogenesis in embryonic stem cells through a AKT1 pathway. Participates in vasculogenesis in embryonic stem cells through PDK1 and protein kinase C pathway. Also has serine-protein kinase activity: phosphorylates PIK3R1 (p85alpha regulatory subunit), EIF4EBP1 and HRAS. Plays a role in the positive regulation of phagocytosis and pinocytosis. This Mus musculus (Mouse) protein is Phosphatidylinositol 4,5-bisphosphate 3-kinase catalytic subunit alpha isoform (Pik3ca).